The chain runs to 97 residues: MTDLRHYDVIVSPAITEKSTMASEQNQVVFNVAKKASKPEIKAAVEALFGVKVMAVNTLVRKGKIKRFRGTIGRQSDVKKAIVTLADGQSIDVATGL.

The protein belongs to the universal ribosomal protein uL23 family. As to quaternary structure, part of the 50S ribosomal subunit. Contacts protein L29, and trigger factor when it is bound to the ribosome.

One of the early assembly proteins it binds 23S rRNA. One of the proteins that surrounds the polypeptide exit tunnel on the outside of the ribosome. Forms the main docking site for trigger factor binding to the ribosome. The polypeptide is Large ribosomal subunit protein uL23 (Mesorhizobium japonicum (strain LMG 29417 / CECT 9101 / MAFF 303099) (Mesorhizobium loti (strain MAFF 303099))).